The chain runs to 163 residues: Phosphopantetheine adenylyltransferase (163 aa).

Thr-10 contacts substrate. ATP is bound by residues 10 to 11 and His-18; that span reads TF. The substrate site is built by Lys-42, Leu-74, and Arg-88. ATP-binding positions include 89–91, Glu-99, and 124–130; these read GLR and NSFISST.

The protein belongs to the bacterial CoaD family. Homohexamer. The cofactor is Mg(2+).

Its subcellular location is the cytoplasm. It catalyses the reaction (R)-4'-phosphopantetheine + ATP + H(+) = 3'-dephospho-CoA + diphosphate. Its pathway is cofactor biosynthesis; coenzyme A biosynthesis; CoA from (R)-pantothenate: step 4/5. Reversibly transfers an adenylyl group from ATP to 4'-phosphopantetheine, yielding dephospho-CoA (dPCoA) and pyrophosphate. This is Phosphopantetheine adenylyltransferase from Shewanella putrefaciens (strain CN-32 / ATCC BAA-453).